The following is a 362-amino-acid chain: MERIVVTLGERSYPITIASGLFNEPASFLPLKSGEQVMLVTSETLAPLYLDKVRGVLEQAGVNVDSVILPDGEQYKSLAVLDTVFTALLQKPHGRDTTLVALGGGVVGDLTGFAAASYQRGVRFIQVPTTLLSQVDSSVGGKTAVNHPLGKNMIGAFYQPASVVVDLDCLKTLPPRELASGLAEVIKYGIILDGAFFNWLEENLDALLRLDGPAMAYCIRRCCELKAEVVVADERETGLRALLNLGHTFGHAIEAEMGYGNWLHGEAVAAGMVMAARTSERLGQFSSAETQRIITLLTRAGLPVNGPREMSAQAYLPHMLRDKKVLAGEIRLILPLAIGKSEVRSGVSHELVLNAIADCQSA.

Residues 71 to 76, 105 to 109, 129 to 130, K142, K151, and 169 to 172 each bind NAD(+); these read DGEQYK, GVVGD, TT, and CLKT. Zn(2+)-binding residues include E184, H247, and H264.

It belongs to the sugar phosphate cyclases superfamily. Dehydroquinate synthase family. It depends on Co(2+) as a cofactor. Zn(2+) serves as cofactor. The cofactor is NAD(+).

It localises to the cytoplasm. The catalysed reaction is 7-phospho-2-dehydro-3-deoxy-D-arabino-heptonate = 3-dehydroquinate + phosphate. The protein operates within metabolic intermediate biosynthesis; chorismate biosynthesis; chorismate from D-erythrose 4-phosphate and phosphoenolpyruvate: step 2/7. Functionally, catalyzes the conversion of 3-deoxy-D-arabino-heptulosonate 7-phosphate (DAHP) to dehydroquinate (DHQ). The sequence is that of 3-dehydroquinate synthase from Shigella flexneri serotype 5b (strain 8401).